Reading from the N-terminus, the 62-residue chain is MARYRRHSRSRSRSRYRRRRRRRSRHHNRRRTYRRSRRHSRRRRGRRRGYSRRRYSRRRRRY.

The segment at 1-62 (MARYRRHSRS…RRYSRRRRRY (62 aa)) is disordered.

It belongs to the protamine P1 family. In terms of tissue distribution, testis.

Its subcellular location is the nucleus. It is found in the chromosome. Protamines substitute for histones in the chromatin of sperm during the haploid phase of spermatogenesis. They compact sperm DNA into a highly condensed, stable and inactive complex. The sequence is that of Sperm protamine P1 (PRM1) from Sminthopsis longicaudata (Long-tailed dunnart).